The sequence spans 568 residues: Periplasmic trehalase (568 aa).

The N-terminal stretch at 1-39 (MPYATARSGDVMSSAAPPCCTSLLGLSLSMFVAPGTLTA) is a signal peptide. Residues Arg-169, 176–177 (WD), Asn-213, 222–224 (RSQ), 294–296 (RPE), and Gly-327 contribute to the substrate site. Catalysis depends on proton donor/acceptor residues Asp-329 and Glu-511. Residue Glu-526 participates in substrate binding.

Belongs to the glycosyl hydrolase 37 family.

The protein resides in the periplasm. It carries out the reaction alpha,alpha-trehalose + H2O = alpha-D-glucose + beta-D-glucose. Functionally, provides the cells with the ability to utilize trehalose at high osmolarity by splitting it into glucose molecules that can subsequently be taken up by the phosphotransferase-mediated uptake system. In Xanthomonas axonopodis pv. citri (strain 306), this protein is Periplasmic trehalase.